A 562-amino-acid polypeptide reads, in one-letter code: NRAMP-like transporter smf-1 (562 aa).

At 1–55 (MASSNNDGPIEPEAEPWRITQNDHLEQDLLEEDAESQERVDIPVDDVEKAFSFKK) the chain is on the cytoplasmic side. The chain crosses the membrane as a helical span at residues 56 to 76 (LWAFTGPGFLMSIAYLDPGNI). The Extracellular segment spans residues 77–83 (ESDLQSG). The chain crosses the membrane as a helical span at residues 84 to 104 (AQAAYKLLWVLLSAHIIGMLL). Topologically, residues 105–140 (QRMSARLGVVSGKHMAEVAYQFYPRLPRIILWLMIE) are cytoplasmic. The chain crosses the membrane as a helical span at residues 141–161 (IAIVCSDMQEVIGTAIAIFLL). Topologically, residues 162–164 (SKG) are extracellular. A helical transmembrane segment spans residues 165 to 185 (FVPLYVGVFITILDTFTFLLI). Over 186-194 (DRYGIRKLE) the chain is Cytoplasmic. A helical membrane pass occupies residues 195 to 215 (LIFGFLILTMTVSFGYEFVVV). The Extracellular portion of the chain corresponds to 216-241 (KPPIGEVISGMVVPWCAGCGKGEFMQ). Residues 242–262 (AISVVGAVIMPHNLYLHSALV) form a helical membrane-spanning segment. Topologically, residues 263 to 287 (KSRRVDRKDRRRVAEANKYFTLESA) are cytoplasmic. The helical transmembrane segment at 288–308 (IALFLSFFINLFVVAVFAHGL) threads the bilayer. Residues 309–347 (YQKTNADVREMCIARHDIPDADIFPNNTEPVEVDIYKGG) lie on the Extracellular side of the membrane. An N-linked (GlcNAc...) asparagine glycan is attached at Asn334. A helical transmembrane segment spans residues 348-368 (IYLGCQFGAIAMFIWGIGIFA). Residues 369-398 (AGQSSTMTGTYTGQFVMEGFVKIEWPKWKR) lie on the Cytoplasmic side of the membrane. The helical transmembrane segment at 399–419 (VLITRAIAITPTLVLTFYSQG) threads the bilayer. The Extracellular segment spans residues 420–428 (VQNLTGMND). The N-linked (GlcNAc...) asparagine glycan is linked to Asn422. A helical transmembrane segment spans residues 429-449 (FLNCVQMIQLPFALIPIITFT). Over 450-462 (SSRKIMHDFRSSK) the chain is Cytoplasmic. A helical transmembrane segment spans residues 463–483 (VFQIFALITSALILSINVYFI). The Extracellular portion of the chain corresponds to 484–496 (SDYVFSRLGSEWY). The helical transmembrane segment at 497–517 (IIMVLAPITFAYVLFVLYLAL) threads the bilayer. The Cytoplasmic portion of the chain corresponds to 518–562 (YCLVSCEIIPDTVSIRGFSFNKSYENDAPWLAVDSSAVHDNAGYQ).

This sequence belongs to the NRAMP family. As to expression, expressed in dopaminergic neurons (at protein level). Expressed predominantly in anterior and posterior intestine, rectal gland cell, H-shaped excretory cell, vulva cells, proximal uterus and spermatheca in adults. Weakly expressed in hyp7 hypodermis, pharyngeal muscles and some anterior sensory, ring and posterior head neurons in adults. Expressed in the anchor cell at the larval stage.

Its subcellular location is the apical cell membrane. The protein localises to the cytoplasmic vesicle membrane. Probable divalent metal ion transporter which regulates Mn(2+) uptake. This is NRAMP-like transporter smf-1 (smf-1) from Caenorhabditis elegans.